The primary structure comprises 511 residues: IWS1-like protein (511 aa).

The tract at residues 1–200 (MSDHEEESHG…DDGPVDRHGR (200 aa)) is disordered. 2 stretches are compositionally biased toward low complexity: residues 11–30 (ASPTSPASSGASSPLAPISP) and 55–86 (APASPARDSSAPASPSAASPAGSRSPSPSPVK). The span at 94-103 (DSDEDSDAEE) shows a compositional bias: acidic residues. The span at 134–143 (HEGTSKKEPT) shows a compositional bias: basic and acidic residues. Acidic residues predominate over residues 166-179 (LDEFVEGRDEEESQ). One can recognise a TFIIS N-terminal domain in the interval 294–374 (SALSEWLAPL…GEWARPIYHL (81 aa)). Positions 382-454 (SRQEREERDY…RARVPKPSTK (73 aa)) are disordered. Basic and acidic residues-rich tracts occupy residues 383 to 395 (RQEREERDYSRMP) and 414 to 425 (DQPKRPRIRDAD).

The protein belongs to the IWS1 family.

Its subcellular location is the nucleus. This is IWS1-like protein from Caenorhabditis elegans.